The following is a 358-amino-acid chain: C-C chemokine receptor type 3 (358 aa).

Residues 1–43 (MATYPEEAELETEFPGTTFYDYEFAQPCFKVSITDLGAQFLPS) lie on the Extracellular side of the membrane. A helical membrane pass occupies residues 44-64 (LFSLVFIVGLLGNITVIVVLT). Residues 65–74 (KYQKLKIMTN) lie on the Cytoplasmic side of the membrane. A helical transmembrane segment spans residues 75-95 (IYLLNLAISDLLFLFTLPFWT). Residues 96 to 112 (YYVHWNKWVFGHFMCKI) are Extracellular-facing. A helical transmembrane segment spans residues 113 to 133 (ISGLYYVGLFSEIFFIILLTI). Residues 134–154 (DRYLAIVHAVFALRTRTVTFG) lie on the Cytoplasmic side of the membrane. The helical transmembrane segment at 155–175 (IITSVITWVLAVLAALPEFMF) threads the bilayer. Residues 176–206 (YGTQGHFEVLFCGPSYPEKKEHHWKRFQALR) lie on the Extracellular side of the membrane. Residues 207–227 (MNIFGLALPLLIMIICYTGII) form a helical membrane-spanning segment. The Cytoplasmic segment spans residues 228 to 243 (KTLLRCPSKKKYKAIR). Residues 244-264 (LIFVIMVVFFVFWTPYNLLLL) form a helical membrane-spanning segment. Over 265–287 (FSAFDLSFLDDCERSKQLDMAKH) the chain is Extracellular. The chain crosses the membrane as a helical span at residues 288-308 (VTEVIAHTHCCINPIIYAFVG). At 309–358 (ERFQKYLRHFLHRNVTMHLSKYIPFFTSEKLERSSSISPSSGDPELSVVF) the chain is on the cytoplasmic side.

This sequence belongs to the G-protein coupled receptor 1 family.

Its subcellular location is the cell membrane. In terms of biological role, receptor for C-C type chemokine. Binds and responds to a variety of chemokines, including CCL11, CCL26, CCL7, CCL13, RANTES(CCL5) and CCL15. Subsequently transduces a signal by increasing the intracellular calcium ions level. In addition acts as a possible functional receptor for NARS1. The polypeptide is C-C chemokine receptor type 3 (CCR3) (Cavia porcellus (Guinea pig)).